The chain runs to 1264 residues: BRCA2-interacting transcriptional repressor EMSY (1264 aa).

Residues 1 to 442 (MPVVWPTLLD…LPKPVTATLP (442 aa)) form an interaction with BRCA2 region. The region spanning 16-114 (CKRILRKLEL…EWSIEGRRLV (99 aa)) is the ENT domain. The interval 118 to 122 (PRLVP) is interaction with ZMYND11. Residues 145–179 (PVPAETASKDGVSCSDEDEKPRKRRRTNSSSSSPV) form a disordered region. Thr171 is subject to Phosphothreonine. Phosphoserine occurs at positions 173 and 177. 2 O-linked (GlcNAc) serine glycosylation sites follow: Ser192 and Ser200. The residue at position 202 (Ser202) is a Phosphoserine. An O-linked (GlcNAc) threonine glycan is attached at Thr235. Over residues 364–406 (FPKQHQQSPKQQLQQVQQQTQQPVAQPSSVSQQQQPQQSALPP) the composition is skewed to low complexity. Residues 364–407 (FPKQHQQSPKQQLQQVQQQTQQPVAQPSSVSQQQQPQQSALPPG) are disordered. O-linked (GlcNAc) threonine glycans are attached at residues Thr465 and Thr470. O-linked (GlcNAc) serine glycosylation occurs at Ser521. The segment covering 660–671 (SRVADASNSSAQ) has biased composition (polar residues). Residues 660–700 (SRVADASNSSAQEGKEEPQGYTDSSSSSTESSQSSQDSQPV) are disordered. Over residues 681–698 (TDSSSSSTESSQSSQDSQ) the composition is skewed to low complexity. 2 positions are modified to phosphoserine: Ser782 and Ser785. Thr1069 carries an O-linked (GlcNAc) threonine glycan. At Ser1085 the chain carries Phosphoserine. Positions 1232-1264 (QLDDDETAMEQDIDSSTEDGTEPSPSQSAVERS) are disordered. The span at 1233 to 1252 (LDDDETAMEQDIDSSTEDGT) shows a compositional bias: acidic residues. The segment covering 1254 to 1264 (PSPSQSAVERS) has biased composition (polar residues).

As to quaternary structure, homodimer. Interacts with the transactivation domain of BRCA2. Interacts with CBX1 (via chromoshadow domain). Interacts with ZMYND11. Does not interact with CBX3 or CBX5. Component of a nuclear receptor-mediated transcription complex composed of at least ZNF335, CCAR2 and EMSY; the complex stimulates the transcription of nuclear receptor target genes such as SOX9 and HOXA1. Within the complex interacts with CCAR2 and ZNF335. Components of this complex may associate with components of a histone methylation complex to form a complex at least composed of ZNF335, HCFC1, CCAR2, EMSY, MKI67, RBBP5, ASH2L and WDR5. Within this complex, interacts with ASH2L and RBBP5.

The protein resides in the nucleus. Its function is as follows. Regulator which is able to repress transcription, possibly via its interaction with a multiprotein chromatin remodeling complex that modifies the chromatin. Its interaction with BRCA2 suggests that it may play a central role in the DNA repair function of BRCA2. Mediates ligand-dependent transcriptional activation by nuclear hormone receptors. The protein is BRCA2-interacting transcriptional repressor EMSY of Mus musculus (Mouse).